Consider the following 257-residue polypeptide: Diphthine synthase (257 aa).

S-adenosyl-L-methionine contacts are provided by residues Ile-11, Asp-89, Ile-92, 117–118, Leu-169, Leu-210, and His-235; that span reads SV.

The protein belongs to the diphthine synthase family. In terms of assembly, homodimer.

The catalysed reaction is 2-[(3S)-amino-3-carboxypropyl]-L-histidyl-[translation elongation factor 2] + 3 S-adenosyl-L-methionine = diphthine-[translation elongation factor 2] + 3 S-adenosyl-L-homocysteine + 3 H(+). The protein operates within protein modification; peptidyl-diphthamide biosynthesis. In terms of biological role, S-adenosyl-L-methionine-dependent methyltransferase that catalyzes the trimethylation of the amino group of the modified target histidine residue in translation elongation factor 2 (EF-2), to form an intermediate called diphthine. The three successive methylation reactions represent the second step of diphthamide biosynthesis. The sequence is that of Diphthine synthase from Saccharolobus solfataricus (strain ATCC 35092 / DSM 1617 / JCM 11322 / P2) (Sulfolobus solfataricus).